The primary structure comprises 2193 residues: Genome polyprotein (2193 aa).

Positions 1 to 23 (MGSQVSTQRSGSHENSNSASEGS) are disordered. The N-myristoyl glycine; by host moiety is linked to residue Gly-2. At 2–1503 (GSQVSTQRSG…HLNRAVLVMQ (1502 aa)) the chain is on the cytoplasmic side. The segment at 566–588 (GDPIADMIDQTVNNQVNRSLTAL) is amphipathic alpha-helix. Active-site for protease 2A activity residues include His-883 and Asp-901. The Zn(2+) site is built by Cys-918 and Cys-920. Catalysis depends on Cys-972, which acts as the For protease 2A activity. 2 residues coordinate Zn(2+): Cys-978 and His-980. Residues 1112-1184 (SASWLKKFND…EQSAASQEDL (73 aa)) are membrane-binding. The segment at 1112 to 1250 (SASWLKKFND…SPGTGKSLAT (139 aa)) is oligomerization. The RNA-binding stretch occupies residues 1133 to 1137 (SSKIS). Residues 1216 to 1374 (EKRMNNYMQF…YKTDLGRLDA (159 aa)) enclose the SF3 helicase domain. 1240–1247 (GSPGTGKS) provides a ligand contact to ATP. Positions 1381, 1392, and 1397 each coordinate Zn(2+). The C4-type; degenerate zinc finger occupies 1381–1397 (CTENNTANFKRCSPLVC). The interval 1424-1431 (EYNNRSAI) is RNA-binding. The oligomerization stretch occupies residues 1435-1440 (IEALFQ). An intramembrane segment occupies 1504 to 1519 (SIATVVAVVSLVYVIY). Topologically, residues 1520 to 2193 (KLFAGFQGAY…NLRRNWLELF (674 aa)) are cytoplasmic. Tyr-1529 bears the O-(5'-phospho-RNA)-tyrosine mark. The 179-residue stretch at 1549–1727 (GPSLDFALSL…FCAGLKRGYF (179 aa)) folds into the Peptidase C3 domain. Residues His-1588, Glu-1619, and Cys-1695 each act as for protease 3C activity in the active site. Residues 1958-2074 (GSLFAFDYSG…SYPFPIDCSE (117 aa)) form the RdRp catalytic domain. Mg(2+)-binding residues include Asp-1964 and Asp-2060.

This sequence belongs to the picornaviruses polyprotein family. In terms of assembly, interacts with capsid protein VP1 and capsid protein VP3 to form heterotrimeric protomers. Interacts with capsid protein VP0, and capsid protein VP3 to form heterotrimeric protomers. Five protomers subsequently associate to form pentamers which serve as building blocks for the capsid. Interacts with capsid protein VP2, capsid protein VP3 and capsid protein VP4 following cleavage of capsid protein VP0. As to quaternary structure, interacts with capsid protein VP1 and capsid protein VP3 in the mature capsid. In terms of assembly, interacts with capsid protein VP0 and capsid protein VP1 to form heterotrimeric protomers. Five protomers subsequently associate to form pentamers which serve as building blocks for the capsid. Interacts with capsid protein VP4 in the mature capsid. Interacts with protein 2C; this interaction may be important for virion morphogenesis. Interacts with capsid protein VP1 and capsid protein VP3. As to quaternary structure, homodimer. In terms of assembly, homohexamer; forms a hexameric ring structure with 6-fold symmetry characteristic of AAA+ ATPases. Interacts (via N-terminus) with host RTN3 (via reticulon domain); this interaction is important for viral replication. Interacts with capsid protein VP3; this interaction may be important for virion morphogenesis. Interacts with protein 3CD. As to quaternary structure, homodimer. Interacts with host GBF1. Interacts (via GOLD domain) with host ACBD3 (via GOLD domain); this interaction allows the formation of a viral protein 3A/ACBD3 heterotetramer with a 2:2 stoichiometry, which will stimulate the recruitment of host PI4KB in order to synthesize PI4P at the viral RNA replication sites. In terms of assembly, interacts with RNA-directed RNA polymerase. Interacts with host IFIH1/MDA5; this interaction inhibits host IFIH1. As to quaternary structure, protein 3CD: Interacts with protein 3AB and with RNA-directed RNA polymerase. In terms of assembly, interacts with Viral protein genome-linked and with protein 3CD. It depends on Mg(2+) as a cofactor. Specific enzymatic cleavages in vivo by the viral proteases yield processing intermediates and the mature proteins. In terms of processing, myristoylation is required for the formation of pentamers during virus assembly. Further assembly of 12 pentamers and a molecule of genomic RNA generates the provirion. Post-translationally, during virion maturation, immature virions are rendered infectious following cleavage of VP0 into VP4 and VP2. This maturation seems to be an autocatalytic event triggered by the presence of RNA in the capsid and it is followed by a conformational change infectious virion. Myristoylation is required during RNA encapsidation and formation of the mature virus particle. In terms of processing, VPg is uridylylated by the polymerase into VPg-pUpU. This acts as a nucleotide-peptide primer for the genomic RNA replication.

The protein resides in the virion. Its subcellular location is the host cytoplasm. It is found in the host cytoplasmic vesicle membrane. It localises to the host nucleus. The enzyme catalyses a ribonucleoside 5'-triphosphate + H2O = a ribonucleoside 5'-diphosphate + phosphate + H(+). It catalyses the reaction Selective cleavage of Tyr-|-Gly bond in the picornavirus polyprotein.. It carries out the reaction RNA(n) + a ribonucleoside 5'-triphosphate = RNA(n+1) + diphosphate. The catalysed reaction is Selective cleavage of Gln-|-Gly bond in the poliovirus polyprotein. In other picornavirus reactions Glu may be substituted for Gln, and Ser or Thr for Gly.. With respect to regulation, replication or transcription is subject to high level of random mutations by the nucleotide analog ribavirin. Its function is as follows. Forms an icosahedral capsid of pseudo T=3 symmetry with capsid proteins VP2 and VP3. The capsid is 300 Angstroms in diameter, composed of 60 copies of each capsid protein and enclosing the viral positive strand RNA genome. Capsid protein VP1 mainly forms the vertices of the capsid. Capsid protein VP1 interacts with host cell receptor to provide virion attachment to target host cells. This attachment induces virion internalization. After binding to its receptor, the capsid undergoes conformational changes. Capsid protein VP1 N-terminus (that contains an amphipathic alpha-helix) and capsid protein VP4 are externalized. Together, they shape a pore in the host membrane through which viral genome is translocated to host cell cytoplasm. Functionally, forms an icosahedral capsid of pseudo T=3 symmetry with capsid proteins VP2 and VP3. The capsid is 300 Angstroms in diameter, composed of 60 copies of each capsid protein and enclosing the viral positive strand RNA genome. Lies on the inner surface of the capsid shell. After binding to the host receptor, the capsid undergoes conformational changes. Capsid protein VP4 is released, Capsid protein VP1 N-terminus is externalized, and together, they shape a pore in the host membrane through which the viral genome is translocated into the host cell cytoplasm. In terms of biological role, component of immature procapsids, which is cleaved into capsid proteins VP4 and VP2 after maturation. Allows the capsid to remain inactive before the maturation step. Its function is as follows. Cysteine protease that cleaves viral polyprotein and specific host proteins. It is responsible for the autocatalytic cleavage between the P1 and P2 regions, which is the first cleavage occurring in the polyprotein. Also cleaves the host translation initiation factor EIF4G1, in order to shut down the capped cellular mRNA translation. Inhibits the host nucleus-cytoplasm protein and RNA trafficking by cleaving host members of the nuclear pores. Counteracts stress granule formation probably by antagonizing its assembly or promoting its dissassembly. Cleaves and inhibits host IFIH1/MDA5, thereby inhibiting the type-I IFN production and the establishment of the antiviral state. Cleaves and inhibits host MAVS, thereby inhibiting the type-I IFN production and the establishment of the antiviral state. Functionally, plays an essential role in the virus replication cycle by acting as a viroporin. Creates a pore in the host endoplasmic reticulum and as a consequence releases Ca2+ in the cytoplasm of infected cell. In turn, high levels of cytoplasmic calcium may trigger membrane trafficking and transport of viral ER-associated proteins to viroplasms, sites of viral genome replication. Induces and associates with structural rearrangements of intracellular membranes. Displays RNA-binding, nucleotide binding and NTPase activities. May play a role in virion morphogenesis and viral RNA encapsidation by interacting with the capsid protein VP3. In terms of biological role, localizes the viral replication complex to the surface of membranous vesicles. Together with protein 3CD binds the Cis-Active RNA Element (CRE) which is involved in RNA synthesis initiation. Acts as a cofactor to stimulate the activity of 3D polymerase, maybe through a nucleid acid chaperone activity. Its function is as follows. Localizes the viral replication complex to the surface of membranous vesicles. It inhibits host cell endoplasmic reticulum-to-Golgi apparatus transport and causes the disassembly of the Golgi complex, possibly through GBF1 interaction. This would result in depletion of MHC, trail receptors and IFN receptors at the host cell surface. Plays an essential role in viral RNA replication by recruiting ACBD3 and PI4KB at the viral replication sites, thereby allowing the formation of the rearranged membranous structures where viral replication takes place. Functionally, acts as a primer for viral RNA replication and remains covalently bound to viral genomic RNA. VPg is uridylylated prior to priming replication into VPg-pUpU. The oriI viral genomic sequence may act as a template for this. The VPg-pUpU is then used as primer on the genomic RNA poly(A) by the RNA-dependent RNA polymerase to replicate the viral genome. During genome replication, the VPg-RNA linkage is removed by the host TDP2, thereby accelerating replication. During the late stage of the replication cycle, host TDP2 is excluded from sites of viral RNA synthesis and encapsidation, allowing for the generation of progeny virions. Involved in the viral replication complex and viral polypeptide maturation. It exhibits protease activity with a specificity and catalytic efficiency that is different from protease 3C. Protein 3CD lacks polymerase activity. Protein 3CD binds to the 5'UTR of the viral genome. In terms of biological role, major viral protease that mediates proteolytic processing of the polyprotein. Cleaves host EIF5B, contributing to host translation shutoff. Also cleaves host PABPC1, contributing to host translation shutoff. Binds and inhibits host IFIH1/MDA5, thereby inhibiting the type-I IFN production and the establishment of the antiviral state. Cleaves host MAP3K7/TAK1, resulting in inhibition of TRAF6-triggered NF-kappa-B induction. Cleaves host NLRP1, triggers host N-glycine-mediated degradation of the autoinhibitory NLRP1 N-terminal fragment. Its function is as follows. Replicates the viral genomic RNA on the surface of intracellular membranes. May form linear arrays of subunits that propagate along a strong head-to-tail interaction called interface-I. Covalently attaches UMP to a tyrosine of VPg, which is used to prime RNA synthesis. The positive stranded RNA genome is first replicated at virus induced membranous vesicles, creating a dsRNA genomic replication form. This dsRNA is then used as template to synthesize positive stranded RNA genomes. ss(+)RNA genomes are either translated, replicated or encapsidated. The sequence is that of Genome polyprotein from Homo sapiens (Human).